The primary structure comprises 210 residues: Ras-related protein RABC2a (210 aa).

A GTP-binding site is contributed by 20–27 (GDSGVGKS). The Effector region signature appears at 41–49 (LAPTIGVDF). GTP-binding positions include 67–71 (DTAGQ), 127–130 (NKVD), and 157–158 (SA). Residues cysteine 208 and cysteine 209 are each lipidated (S-geranylgeranyl cysteine).

This sequence belongs to the small GTPase superfamily. Rab family. As to quaternary structure, interacts with XI-2/MYA2.

The protein resides in the cell membrane. It localises to the cytoplasm. In terms of biological role, intracellular vesicle trafficking and protein transport. This chain is Ras-related protein RABC2a (RABC2A), found in Arabidopsis thaliana (Mouse-ear cress).